The chain runs to 781 residues: MSKESGKWWESDDKFAKAVYQQFVEFYEKVTGTDLELIQILKDHYNISLDNPLENPSSLFDLVARIKNNLKNSPDLYSHHFQSHGQLSDHPHALSSSSSHAEPRGENAVLSSEDLHKPGQVSVQLPGTNYVGPGNELQAGPPQSAVDSAARIHDFRYSQLAKLGINPYTHWTVADEELLKNIKNETGFQAQVVKDYFTLKGAAAPVAHFQGSLPEVPAYNASEKYPSMTSVNSAEASTGAGGGGSNPVKSMWSEGATFSANSVTCTFSRQFLIPYDPEHHYKVFSPAASSCHNASGKEAKVCTISPIMGYSTPWRYLDFNALNLFFSPLEFQHLIENYGSIAPDALTVTISEIAVKDVTDKTGGGVQVTDSTTGRLSMLVDHEYKYPYVLGQGQDTLAPELPIWVYFPPQYAYLTVGDVNTQGISGDSKKLASEESAFYVLEHSSFQLLGTGGTATMSYKFPPVPPENLEGCSQHFYEMYNPLYGSRLGVPDTLGGDPKFRSLTHEDHAIQPQNFMPGPLVNSVSTKEGDSSNTGAGKALTGLSTGTSQNTRISLRPGPVSQPYHHWDTDKYVPGINAISHGQTTYGNAEDKEYQQGVGRFPNEKEQLKQLQGLNMHTYFPNKGTQQYTDQIERPLMVGSVWNRRALHYESQLWSKIPNLDDSFKTQFAALGGWGLHQPPPQIFLKILPQSGPIGGIKSMGITTLVQYAVGIMTVTMTFKLGPRKATGRWNPQPGVYPPHAAGHLPYVLYDPTATDAKQHHRHGYEKPEELWTAKSRVHPL.

The binding to the host cell receptor and internalization stretch occupies residues 5-80; it reads SGKWWESDDK…KNSPDLYSHH (76 aa). A disordered region spans residues 77–111; that stretch reads YSHHFQSHGQLSDHPHALSSSSSHAEPRGENAVLS. The phospholipase A2-like stretch occupies residues 123-181; the sequence is VQLPGTNYVGPGNELQAGPPQSAVDSAARIHDFRYSQLAKLGINPYTHWTVADEELLKN. Composition is skewed to polar residues over residues 524–535 and 542–553; these read VSTKEGDSSNTG and GLSTGTSQNTRI. Residues 524 to 561 form a disordered region; that stretch reads VSTKEGDSSNTGAGKALTGLSTGTSQNTRISLRPGPVS. The Nuclear localization signal signature appears at 720 to 730; it reads KLGPRKATGRW.

The protein belongs to the parvoviridae capsid protein family. In terms of assembly, heteromultimer of isoform Minor capsid protein VP1, isoform Minor capsid protein VP2 and isoform Major capsid protein VP3. As to quaternary structure, heteromultimer of isoform Minor capsid protein VP1, isoform Minor capsid protein VP2 and isoform Major capsid protein VP3. 20 fold more abundant than the minor capsid protein VP1.

It localises to the virion. Its subcellular location is the host nucleus. The protein localises to the host cytoplasm. It catalyses the reaction a 1,2-diacyl-sn-glycero-3-phosphocholine + H2O = a 1-acyl-sn-glycero-3-phosphocholine + a fatty acid + H(+). Capsid protein self-assembles to form an icosahedral capsid with a T=1 symmetry, about 20 nm in diameter, and consisting of 60 copies of two size variants of the capsid proteins, VP1 and VP2, which differ by the presence of an N-terminal extension in the minor protein VP1. The capsid encapsulates the genomic ssDNA. Binds to erythroid progenitor cells expressing high levels of P antigen and uses host ITGA5-ITGB1 and XRCC5/Ku80 autoantigen as coreceptors on the cell surface to provide virion attachment to target cell. This attachment induces virion internalization predominantly through clathrin-dependent endocytosis. Binding to the host receptors also induces capsid rearrangements leading to surface exposure of VP1 N-terminus, specifically its phospholipase A2-like region. The additional N-terminal region of isoform Minor capsid protein VP1, called VP1u, may serve as a lipolytic enzyme to breach the endosomal membrane during entry into host cell and might contribute to virus transport to the nucleus. The sequence is that of Minor capsid protein VP1 (vp) from Human parvovirus B19 (strain HV) (HPV B19).